The chain runs to 131 residues: UPF0102 protein YraN (131 aa).

Positions 1–19 (MATVPTRSGSPRQLTTKQT) are enriched in polar residues. Residues 1 to 21 (MATVPTRSGSPRQLTTKQTGD) form a disordered region.

Belongs to the UPF0102 family.

The protein is UPF0102 protein YraN of Escherichia coli O127:H6 (strain E2348/69 / EPEC).